Reading from the N-terminus, the 326-residue chain is MKLNILKLLNNNNNKNMLLKNMLLKMNINNNNMNTNNNNMKYMNNKLQSINNMNNWSLQMYNYNKNNELNMMMMMNMMNKLLYKLMNMIMINNMTMNVNNKNNNNIIMMKPMYQYMMNKLNIKFYYYINNNNMNTNYYMNMLYKLMNTLNNNNNMYMNNMNNIMSMYINKNINIEMIKLNYVYNNKDIMNKYLSTMDIDTLNNNSTMNLLNNMMTKMNNNNIIMNYMNNMNNMRNNKYINNMSSNYIMNMLMYKYLTGWTILLKGRLNKNMTRTNKYILYNGSNKMNMYMKNNYKLNYISNNHFINNINNVNKNGKYNIKVKLSYI.

This sequence belongs to the universal ribosomal protein uS3 family.

It localises to the mitochondrion. Essential for mitochondrial protein synthesis and required for the maturation of small ribosomal subunits. This chain is Small ribosomal subunit protein uS3m (VAR1), found in Naumovozyma castellii (Yeast).